Reading from the N-terminus, the 681-residue chain is MVKVQKPQPKSLNKSASIEGVVKKKGKPEKTKKLATDATLELASNKKAKNAAPVKKDAIKKEPEVSKKGAEKKQSKAAKRPLILAPPESPAAPAPAAKKSKAKPAASGAPVGKKIEAKKPLILAPPESPVPPKKQEKKTKAAPVKAKKEPAPAKKSVQDPVPSIKKVPAAKKSGQTAALTKKTAKTEKQAAPAKPAKAQPASQLQKKAKAVQKLSKPASPPKSKKALSKSKPGQAKGNAVNKEPAKSKKPVELTFELKAFDEKRFHEIVNENNVTKVCAALKSVVSEEVEKKKNTSIFSDYRYVLQVCSYKIPSCPKRMVKLNLKHSLVGKDDDVALIVPDLQRGAKFDYDPTKQHYEDMLREAGVKQRLTVVPFNQLRNEMGSFEAKRKFLNSYDYLLCDGRLSGQATAFLGKNTQKPRNVLHSLRLSKDNDKLPQEVTRALTRTAFRQLSKGDLIAVPVGNHEITAEQLAENILLVIKQLQEVYPGGLANIRSMYLKIDITGTSALPLYVSMCAPPEDVPYVVGPREQRMLKLKKQANEVLSKFAMTKDAEFIKLTSDQVKRKAQLRKEKAALLAADAAPKDNDGGDAAVPAKKARKESSSEGAKADAESDEEEEVEEAEDSAGESGDEDEEGHDGDDTDEDEDEDDDDDNEDGDDDEDEDDDEEDDDEEDDDDDDDEE.

2 disordered regions span residues 1–248 (MVKV…AKSK) and 579–681 (DAAP…DDEE). Phosphoserine is present on residues Ser15 and Ser17. Residues 54–74 (VKKDAIKKEPEVSKKGAEKKQ) are compositionally biased toward basic and acidic residues. Ser89 is modified (phosphoserine). Residues 103–112 (KPAASGAPVG) show a composition bias toward low complexity. Residue Ser128 is modified to Phosphoserine. Residues 189-217 (QAAPAKPAKAQPASQLQKKAKAVQKLSKP) are compositionally biased toward low complexity. The span at 599-610 (KESSSEGAKADA) shows a compositional bias: basic and acidic residues. A compositionally biased stretch (acidic residues) spans 611-681 (ESDEEEEVEE…EDDDDDDDEE (71 aa)).

This sequence belongs to the universal ribosomal protein uL1 family. Highly divergent.

This Drosophila melanogaster (Fruit fly) protein is Ribosomal L1 domain-containing protein CG13096.